We begin with the raw amino-acid sequence, 346 residues long: DNA-directed RNA polymerases I and III subunit RPAC1 (346 aa).

The residue at position 2 (Ala2) is an N-acetylalanine.

Belongs to the archaeal Rpo3/eukaryotic RPB3 RNA polymerase subunit family. Component of the RNA polymerase I and RNA polymerase III complexes consisting of at least 13 and 17 subunits, respectively. Pol I complex consists of a ten-subunit catalytic core composed of POLR1A/RPA1, POLR1B/RPA2, POLR1C/RPAC1, POLR1D/RPAC2, POLR1H/RPA12, POLR2E/RPABC1, POLR2F/RPABC2, POLR2H/RPABC3, POLR2K/RPABC4 and POLR2L/RPABC5; a mobile stalk subunit POLR1F/RPA43 protruding from the core and additional subunits homologous to general transcription factors POLR1E/RPA49 and POLR1G/RPA34. Part of Pol I pre-initiation complex (PIC), in which Pol I core assembles with RRN3 and promoter-bound UTBF and SL1/TIF-IB complex. Pol III complex consists of a ten-subunit catalytic core composed of POLR3A/RPC1, POLR3B/RPC2, POLR1C/RPAC1, POLR1D/RPAC2, POLR3K/RPC10, POLR2E/RPABC1, POLR2F/RPABC2, POLR2H/RPABC3, POLR2K/RPABC4 and POLR2L/RPABC5; a mobile stalk composed of two subunits POLR3H/RPC8 and CRCP/RPC9, protruding from the core and functioning primarily in transcription initiation; and additional subunits homologous to general transcription factors of the RNA polymerase II machinery, POLR3C/RPC3-POLR3F/RPC6-POLR3G/RPC7 heterotrimer required for transcription initiation and POLR3D/RPC4-POLR3E/RPC5 heterodimer involved in both transcription initiation and termination.

It is found in the nucleus. It localises to the cytoplasm. Its subcellular location is the cytosol. DNA-dependent RNA polymerase catalyzes the transcription of DNA into RNA using the four ribonucleoside triphosphates as substrates. Common component of RNA polymerases I and III which synthesize ribosomal RNA precursors and short non-coding RNAs including 5S rRNA, snRNAs, tRNAs and miRNAs, respectively. POLR1C/RPAC1 is part of the polymerase core and may function as a clamp element that moves to open and close the cleft. In Mus musculus (Mouse), this protein is DNA-directed RNA polymerases I and III subunit RPAC1.